Here is a 390-residue protein sequence, read N- to C-terminus: Leu/Ile/Val-binding protein homolog 6 (390 aa).

Residues 1-21 (MKKIALTALAVFSLAASAAYA) form the signal peptide.

Belongs to the leucine-binding protein family.

Component of an amino-acid transport system. The protein is Leu/Ile/Val-binding protein homolog 6 of Brucella abortus (strain 2308).